Reading from the N-terminus, the 470-residue chain is FAD-dependent monooxygenase nvfK (470 aa).

Positions 1–23 (MEKAKFKVVIVGGSITGLTLAHC) are cleaved as a signal peptide. Residues Glu-35, Gly-49, and Arg-108 each coordinate FAD. Asn-121 carries N-linked (GlcNAc...) asparagine glycosylation. Residue Tyr-216 is part of the active site. Asp-308 and Ala-321 together coordinate FAD. Residues 450–470 (ILMSIVLVAPAWVYIFSSLVW) form a helical membrane-spanning segment.

It belongs to the paxM FAD-dependent monooxygenase family. It depends on FAD as a cofactor.

It is found in the membrane. The catalysed reaction is (3R)-3-farnesyl-6-hydroxy-2,3,5-trimethyl-4-oxocyclohexa-1,5-diene-1-carboxylate + 2-oxoglutarate + O2 = (3R)-[(10S)-11-epoxyfarnesyl]-2,3,5-trimethyl-6-oxido-4-oxocyclohexa-1,5-diene-1-carboxylate + succinate + CO2. It functions in the pathway secondary metabolite biosynthesis; terpenoid biosynthesis. FAD-dependent monooxygenase; part of the gene cluster that mediates the biosynthesis of novofumigatonin, a heavily oxygenated meroterpenoid containing a unique orthoester moiety. The first step of the pathway is the synthesis of 3,5-dimethylorsellinic acid (DMOA) by the polyketide synthase nvfA via condensation of one acetyl-CoA starter unit with 3 malonyl-CoA units and 2 methylations. DMOA is then converted to farnesyl-DMOA by the farnesyltransferase nvfB. Epoxydation by FAD-dependent monooxygenase nvfK, followed by a protonation-initiated cyclization catalyzed by the terpene cyclase nvfL leads to the production of asnavolin H. The short chain dehydrogenase nvfC then as a 3-OH dehydrogenase of asnovolin H to yield chemesin D. There are two branches to synthesize asnovolin A from chemesin D. In one branch, chemesin D undergoes Baeyer-Villiger oxidation by nvfH, methylation by nvfJ, and enoyl reduction by the nvfM D enoylreductase that reduces the double bond between C-5'and C-6', to form respectively asnovolin I, asnovolin K, and asnovolin A. In the other branch, the methylation precedes the Baeyer-Villiger oxidation and the enoyl reduction to yield asnovolin A via the asnovolin J intermediate. Asnovolin A is further converted to fumigatonoid A by the Fe(II)/2-oxoglutarate-dependent dioxygenase nvfI that catalyzes an endoperoxidation reaction. The alpha/beta hydrolase nvfD then acts as an epimerase that converts fumigatonoid A to its C-5' epimer, which then undergoes spontaneous or nvfD-catalyzed lactonization. The following step utilizes the ketoreductase nvfG to produce fumigatonoid B. The dioxygenase nvfE further converts fumigatonoid B into fumigatonoid C. Finally the Fe(II)/2-oxoglutarate-dependent dioxygenase nvfF catalyzes two rounds of oxidation to transform fumigatonoid C into the end product, novofumigatonin A. This is FAD-dependent monooxygenase nvfK from Aspergillus novofumigatus (strain IBT 16806).